The following is a 126-amino-acid chain: Glycine cleavage system H protein (126 aa).

In terms of domain architecture, Lipoyl-binding spans 21–103 (TVTVGISDHA…YESGWIARIK (83 aa)). At Lys-62 the chain carries N6-lipoyllysine.

This sequence belongs to the GcvH family. As to quaternary structure, the glycine cleavage system is composed of four proteins: P, T, L and H. (R)-lipoate serves as cofactor.

In terms of biological role, the glycine cleavage system catalyzes the degradation of glycine. The H protein shuttles the methylamine group of glycine from the P protein to the T protein. This Aliivibrio fischeri (strain ATCC 700601 / ES114) (Vibrio fischeri) protein is Glycine cleavage system H protein.